The chain runs to 248 residues: Secreted and transmembrane protein 1 (248 aa).

The first 28 residues, 1–28, serve as a signal peptide directing secretion; the sequence is MQTCPLAFPGHVSQALGTLLFLAASLSA. Over 29 to 145 the chain is Extracellular; that stretch reads QNEGWDSPIC…AEPQSAPDTG (117 aa). A disulfide bridge links cysteine 38 with cysteine 55. Residue asparagine 56 is glycosylated (N-linked (GlcNAc...) asparagine). The helical transmembrane segment at 146–166 threads the bilayer; sequence FWPVPAVVTAVFILLVALVMF. The Cytoplasmic segment spans residues 167-248; it reads AWYRCRCSQQ…QPLFPYAADP (82 aa).

Belongs to the SECTM family. Interacts with CD7. As to expression, detected at the highest levels in peripheral blood leukocytes and breast cancer cell lines. Found in leukocytes of the myeloid lineage, with the strongest expression observed in granulocytes and no detectable expression in lymphocytes. Expressed in thymic epithelial cells and fibroblasts.

The protein localises to the cell membrane. The protein resides in the secreted. Functionally, may be involved in thymocyte signaling. The chain is Secreted and transmembrane protein 1 (SECTM1) from Homo sapiens (Human).